We begin with the raw amino-acid sequence, 323 residues long: Polycomb complex protein BMI-1-B (323 aa).

The RING-type zinc finger occupies 18–57 (CVLCGGYFIDAATIIECLHSFCKTCIVRYLETSKYCPICD). A Nuclear localization signal motif is present at residues 81–95 (KLVPGLFKGEMKRRR). Positions 238–310 (PHTDRINNTS…HQNPFANRAR (73 aa)) are disordered. Residues 287 to 301 (HISSTINGTNSSSSH) are compositionally biased toward low complexity.

As to quaternary structure, component of a PRC1-like complex. Interacts with cbx4.

Its subcellular location is the nucleus. In terms of biological role, component of a Polycomb group (PcG) multiprotein PRC1-like complex, a complex class required to maintain the transcriptionally repressive state of many genes, including Hox genes, throughout development. PcG PRC1 complex acts via chromatin remodeling and modification of histones; it mediates monoubiquitination of histone H2A 'Lys-119', rendering chromatin heritably changed in its expressibility. In the PRC1 complex, it is required to stimulate the E3 ubiquitin-protein ligase activity of rnf2. The polypeptide is Polycomb complex protein BMI-1-B (bmi1b) (Xenopus laevis (African clawed frog)).